The primary structure comprises 362 residues: MLQVNVELKHHHYPIKIGQGLLTNPQSYAPLKAGDNVMIVSNPTIAQYYLATVRDTLITIGCKVDTVLLADGEQYKTFESLNQIFTALLENDHHRDTTLVALGGGVIGDVTGYAAASYQRGVRFIQIPTTLLAQIDSSIGGKTAINHPLGKNMIGAFYQPAAVIIDTQVLNTLAKRQVSAGLAEVIKYGVAFDSHFFEWLEQHIDQLMQLDPETLAHCIQRCCQLKAAIVAQDETEQGERALLNFGHTFGHSIEAHLGYGTWLHGESVAVGMLEAAELSKILGNLTEDQLARLEKLLANAVLPTTSPDGMTADQYLPYMWRDKKVLNGQLRLVLLKSFGQAYITTEATEQQILTAIQRFTQH.

NAD(+)-binding positions include 71-76, 105-109, 129-130, Lys-142, and Lys-151; these read DGEQYK, GVIGD, and TT. Zn(2+) is bound by residues Glu-184, His-247, and His-264.

Belongs to the sugar phosphate cyclases superfamily. Dehydroquinate synthase family. NAD(+) is required as a cofactor. Requires Co(2+) as cofactor. It depends on Zn(2+) as a cofactor.

The protein resides in the cytoplasm. It catalyses the reaction 7-phospho-2-dehydro-3-deoxy-D-arabino-heptonate = 3-dehydroquinate + phosphate. The protein operates within metabolic intermediate biosynthesis; chorismate biosynthesis; chorismate from D-erythrose 4-phosphate and phosphoenolpyruvate: step 2/7. Its function is as follows. Catalyzes the conversion of 3-deoxy-D-arabino-heptulosonate 7-phosphate (DAHP) to dehydroquinate (DHQ). The chain is 3-dehydroquinate synthase from Haemophilus ducreyi (strain 35000HP / ATCC 700724).